Here is a 299-residue protein sequence, read N- to C-terminus: 4-diphosphocytidyl-2-C-methyl-D-erythritol kinase (299 aa).

Residue Lys11 is part of the active site. 94 to 104 is a binding site for ATP; it reads PQGGGLGGGSS. Asp136 is a catalytic residue.

Belongs to the GHMP kinase family. IspE subfamily.

It carries out the reaction 4-CDP-2-C-methyl-D-erythritol + ATP = 4-CDP-2-C-methyl-D-erythritol 2-phosphate + ADP + H(+). It participates in isoprenoid biosynthesis; isopentenyl diphosphate biosynthesis via DXP pathway; isopentenyl diphosphate from 1-deoxy-D-xylulose 5-phosphate: step 3/6. Its function is as follows. Catalyzes the phosphorylation of the position 2 hydroxy group of 4-diphosphocytidyl-2C-methyl-D-erythritol. This chain is 4-diphosphocytidyl-2-C-methyl-D-erythritol kinase, found in Bordetella parapertussis (strain 12822 / ATCC BAA-587 / NCTC 13253).